Consider the following 414-residue polypeptide: MKQYKILLIVADGLGDRPVSKLNGLTPLEAANKPAITDLLKNSMIGLMDPISPGIIPGSDTSHLSIFGLDPHVYYRGRGAFEALGAGATLSHGDVAFRGNFATVNNDLVVVDRRAGRKLEEGEQLVKELNEKIKEINDVKIKFYKGTEHRIAVVLSGKGISDKVSDTDPHHEGLKVLESKPLEDSNEAIRTAEIINILTRKVFDVLNSSEINKRRIEQGEKPANIVLLRGAAHYVKLPPFSSYTKLKAAAVSATALIKGICRELGMNVITPSGATGGIDTNYNAKAKAAIELLKENDFVFLHIKATDAASHDGLVEEKVKAIERIDRVIGAIIDNIGRDNLILMFTGDHVTPVEIKEHTGDPVPVLLYVPYPIINDNVGDFNEKEARKGSLRIRGLDVTNILLNYSNRAEKYGS.

It belongs to the BPG-independent phosphoglycerate mutase family. A-PGAM subfamily.

The catalysed reaction is (2R)-2-phosphoglycerate = (2R)-3-phosphoglycerate. It participates in carbohydrate degradation; glycolysis; pyruvate from D-glyceraldehyde 3-phosphate: step 3/5. In terms of biological role, catalyzes the interconversion of 2-phosphoglycerate and 3-phosphoglycerate. This is 2,3-bisphosphoglycerate-independent phosphoglycerate mutase from Saccharolobus solfataricus (strain ATCC 35092 / DSM 1617 / JCM 11322 / P2) (Sulfolobus solfataricus).